The following is a 546-amino-acid chain: Mitochondrial distribution and morphology protein 34 (546 aa).

An SMP-LTD domain is found at Met1–Leu195. Disordered regions lie at residues Glu208–Val230, Ser299–Ala319, Thr344–Ser382, Ser395–Ala416, and Arg517–Gln546. The segment covering Arg349 to Arg362 has biased composition (basic residues). Residues Val363 to Asp374 show a composition bias toward basic and acidic residues.

Belongs to the MDM34 family. In terms of assembly, component of the ER-mitochondria encounter structure (ERMES) or MDM complex, composed of MMM1, MDM10, MDM12 and MDM34.

The protein resides in the mitochondrion outer membrane. Component of the ERMES/MDM complex, which serves as a molecular tether to connect the endoplasmic reticulum (ER) and mitochondria. Components of this complex are involved in the control of mitochondrial shape and protein biogenesis, and function in nonvesicular lipid trafficking between the ER and mitochondria. MDM34 is required for the interaction of the ER-resident membrane protein MMM1 and the outer mitochondrial membrane-resident beta-barrel protein MDM10. This is Mitochondrial distribution and morphology protein 34 from Arthroderma otae (strain ATCC MYA-4605 / CBS 113480) (Microsporum canis).